The following is an 802-amino-acid chain: MKTKWLISVIILFVFIFPQNLVFAGEDKNEGVKVVRDNFGVPHLYAKNKKDLYEAYGYVMAKDRLFQLEMFRRGNEGTVSEIFGEDYLSKDEQSRRDGYSNKEIKKMIDGLDRQPKELIAKFAEGISRYVNEALKDPDDKLSKEFHEYQFLPQKWTSTDVVRVYMVSMTYFMDNHQELKNAEILAKLEHEYGTEVSRKMFDDLVWKNDPSAPTSIVSEGKPKRDSSSQSLQILSSAVIKASEKVGKERENFVQTSEELGLPLKIGSNAAIVGSEKSATGNALLFSGPQVGFVAPGFLYEVGLHAPGFDMEGSGFIGYPFIMFGANNHFALSATAGYGNVTDIFEEKLNAKNSSQYLYKGKWRDMEKRKESFTVKGDNGEKKTVEKIYYRTVHGPVISRDETNKVAYSKSWSFRGTEAQSMSAYMKANWAKNLKEFENAASEYTMSLNWYYADKKGDIAYYHVGRYPVRNSKIDERIPTPGTGEYEWKGFIPFKENPHVINPKNGYVVNWNNKPSKEWVNGEYSFYWGEDNRVQQYINGMEARGKVTLEDINEINYTASFAQLRANLFKQLLIDVLDKNKSTNGNYIYLIEKLEEWNNLKEDENKDGYYDAGIAAFFDEWWNNLHDKLFMDELGDFYGITKEITDHRYGASLAYKILNKESTNYKWVNVDQEKIIMESTNEVLAKLQSEKGLKAEKWRMPIKTMTFGEKSLIGIPHGYGSMTPIIEMNRGSENHYIEMTPTGPSGFNITPPGQIGFVKKDGTISDHYDDQLVMFAEWKFKPYLFNKKDINKAAKNVSALNMSK.

An N-terminal signal peptide occupies residues 1-24; the sequence is MKTKWLISVIILFVFIFPQNLVFA. Residue Glu177 participates in Ca(2+) binding. Residues 235 to 265 constitute a propeptide, spacer peptide; it reads SAVIKASEKVGKERENFVQTSEELGLPLKIG. Residue Ser266 is the Nucleophile of the active site. Asp341 provides a ligand contact to Ca(2+).

Belongs to the peptidase S45 family. Heterodimer of an alpha subunit and a beta subunit processed from the same precursor. Requires Ca(2+) as cofactor.

It localises to the secreted. It catalyses the reaction a penicillin + H2O = 6-aminopenicillanate + a carboxylate. The sequence is that of Penicillin G acylase (pac) from Priestia megaterium (Bacillus megaterium).